Here is a 283-residue protein sequence, read N- to C-terminus: Pantothenate synthetase (283 aa).

30 to 37 contributes to the ATP binding site; the sequence is MGALHEGH. Residue histidine 37 is the Proton donor of the active site. Position 61 (glutamine 61) interacts with (R)-pantoate. Glutamine 61 contributes to the beta-alanine binding site. 147–150 is a binding site for ATP; the sequence is GEKD. Glutamine 153 is a binding site for (R)-pantoate. ATP is bound by residues valine 176 and 184–187; that span reads VSSR.

This sequence belongs to the pantothenate synthetase family. Homodimer.

The protein resides in the cytoplasm. The enzyme catalyses (R)-pantoate + beta-alanine + ATP = (R)-pantothenate + AMP + diphosphate + H(+). It participates in cofactor biosynthesis; (R)-pantothenate biosynthesis; (R)-pantothenate from (R)-pantoate and beta-alanine: step 1/1. Catalyzes the condensation of pantoate with beta-alanine in an ATP-dependent reaction via a pantoyl-adenylate intermediate. The chain is Pantothenate synthetase from Chlorobium luteolum (strain DSM 273 / BCRC 81028 / 2530) (Pelodictyon luteolum).